The chain runs to 317 residues: R-spondin-3 (317 aa).

Positions 1 to 20 (MQLQLISIVLILHFMEYTNC) are cleaved as a signal peptide. 3 FU repeats span residues 34-86 (SGVS…GFYG), 92-135 (RNDC…GLVP), and 139-183 (KKEC…EFEP). 11 disulfides stabilise this stretch: C41/C48, C45/C54, C57/C76, C80/C95, C98/C105, C102/C111, C114/C125, C129/C189, C195/C237, C206/C213, and C246/C253. The N-linked (GlcNAc...) asparagine glycan is linked to N184. Positions 194-254 (HCEVSEWSEW…ECFVKKKRCK (61 aa)) constitute a TSP type-1 domain. The segment covering 251–268 (KRCKPPKGQRRGEKKKRF) has biased composition (basic residues). Residues 251 to 317 (KRCKPPKGQR…RDQSRDAGTV (67 aa)) form a disordered region. Positions 274-303 (VTAEARRERKREREKETIDREESENRNKTE) are enriched in basic and acidic residues. N300 carries an N-linked (GlcNAc...) asparagine glycan.

The protein belongs to the R-spondin family. In terms of assembly, binds heparin.

The protein resides in the secreted. Activator of the canonical Wnt signaling pathway by acting as a ligand for lgr4-6 receptors, which acts as a key regulator of angiogenesis. Upon binding to lgr4-6 (lgr4, lgr5 or lgr6), lgr4-6 associate with phosphorylated lrp6 and frizzled receptors that are activated by extracellular Wnt receptors, triggering the canonical Wnt signaling pathway to increase expression of target genes. Acts both in the canonical. Wnt/beta-catenin-dependent pathway and in non-canonical Wnt signaling pathway. Acts as a key regulator of angiogenesis by controlling vascular stability and pruning: acts by activating the non-canonical Wnt signaling pathway in endothelial cells. Can also amplify Wnt signaling pathway independently of LGR4-6 receptors, possibly by acting as a direct antagonistic ligand to RNF43 and ZNRF3. In Danio rerio (Zebrafish), this protein is R-spondin-3 (rspo3).